The sequence spans 62 residues: Photosystem II reaction center protein Z (62 aa).

2 helical membrane passes run 8–28 (VLTA…VAYA) and 41–61 (YVGS…NFLV).

The protein belongs to the PsbZ family. In terms of assembly, PSII is composed of 1 copy each of membrane proteins PsbA, PsbB, PsbC, PsbD, PsbE, PsbF, PsbH, PsbI, PsbJ, PsbK, PsbL, PsbM, PsbT, PsbX, PsbY, PsbZ, Psb30/Ycf12, peripheral proteins PsbO, CyanoQ (PsbQ), PsbU, PsbV and a large number of cofactors. It forms dimeric complexes.

The protein localises to the cellular thylakoid membrane. Functionally, may control the interaction of photosystem II (PSII) cores with the light-harvesting antenna, regulates electron flow through the 2 photosystem reaction centers. PSII is a light-driven water plastoquinone oxidoreductase, using light energy to abstract electrons from H(2)O, generating a proton gradient subsequently used for ATP formation. The chain is Photosystem II reaction center protein Z from Crocosphaera subtropica (strain ATCC 51142 / BH68) (Cyanothece sp. (strain ATCC 51142)).